The following is a 135-amino-acid chain: DNA-binding protein H-NS homolog (135 aa).

A DNA-binding region spans residues 112–117 (QGRTPS).

The protein belongs to the histone-like protein H-NS family. In terms of assembly, homodimer that oligomerizes on DNA into higher-order complexes that form bridges between disparate regions of DNA compacting it.

The protein resides in the cytoplasm. It is found in the nucleoid. In terms of biological role, a DNA-binding protein implicated in transcriptional repression and chromosome organization and compaction. Binds nucleation sites in AT-rich DNA and bridges them, forming higher-order nucleoprotein complexes and condensing the chromosome. A subset of genes are repressed by H-NS in association with other proteins. The sequence is that of DNA-binding protein H-NS homolog (hns) from Buchnera aphidicola subsp. Acyrthosiphon pisum (strain APS) (Acyrthosiphon pisum symbiotic bacterium).